Consider the following 285-residue polypeptide: Bifunctional protein FolD (285 aa).

Residues 169-171, S194, and I235 contribute to the NADP(+) site; that span reads GRS.

This sequence belongs to the tetrahydrofolate dehydrogenase/cyclohydrolase family. In terms of assembly, homodimer.

It catalyses the reaction (6R)-5,10-methylene-5,6,7,8-tetrahydrofolate + NADP(+) = (6R)-5,10-methenyltetrahydrofolate + NADPH. It carries out the reaction (6R)-5,10-methenyltetrahydrofolate + H2O = (6R)-10-formyltetrahydrofolate + H(+). It participates in one-carbon metabolism; tetrahydrofolate interconversion. Functionally, catalyzes the oxidation of 5,10-methylenetetrahydrofolate to 5,10-methenyltetrahydrofolate and then the hydrolysis of 5,10-methenyltetrahydrofolate to 10-formyltetrahydrofolate. This Microcystis aeruginosa (strain NIES-843 / IAM M-2473) protein is Bifunctional protein FolD.